The primary structure comprises 75 residues: Small ribosomal subunit protein bS18 (75 aa).

Belongs to the bacterial ribosomal protein bS18 family. In terms of assembly, part of the 30S ribosomal subunit. Forms a tight heterodimer with protein bS6.

Binds as a heterodimer with protein bS6 to the central domain of the 16S rRNA, where it helps stabilize the platform of the 30S subunit. In Desulforudis audaxviator (strain MP104C), this protein is Small ribosomal subunit protein bS18.